The sequence spans 587 residues: F-box/WD repeat-containing protein sel-10 (587 aa).

A compositionally biased stretch (basic and acidic residues) spans 1 to 11 (MWPRNDVHMDD). Residues 1 to 53 (MWPRNDVHMDDGSMTPEDQEPVTDNDMEYNDNGEESSYSNGSSSSYNADKLSS) are disordered. Positions 17-34 (EDQEPVTDNDMEYNDNGE) are enriched in acidic residues. Over residues 35-47 (ESSYSNGSSSSYN) the composition is skewed to low complexity. Positions 121–167 (RDFLSCLPVELGMKILHNLTGYDLLKVAQVSKNWKLISEIDKIWKSL) constitute an F-box domain. WD repeat units lie at residues 253-291 (GHEDHVITCMQIHDDVLVTGSDDNTLKVWCIDKGEVMYT), 294-333 (GHTGGVWTSQISQCGRYIVSGSTDRTVKVWSTVDGSLLHT), 336-373 (GHTSTVRCMAMAGSILVTGSRDTTLRVWDVESGRHLAT), 376-415 (GHHAAVRCVQFDGTTVVSGGYDFTVKIWNAHTGRCIRTLT), 416-455 (GHNNRVYSLLFESERSIVCSGSLDTSIRVWDFTRPEGQEC), 461-498 (GHTSLTSGMQLRGNILVSCNADSHVRVWDIHEGTCVHM), and 501-539 (GHRSAITSLQWFGRNMVATSSDDGTVKLWDIERGALIRD).

In terms of assembly, probable component of the SCF(sel-10) E3 ubiquitin-protein ligase complex which includes skr-1 and F-box domain-containing protein sel-10 as a substrate recognition component. Interacts with fem-1, fem-2, and fem-3. Interacts with the intracellular domain of glp-1 and sel-12. Interacts with lin-12. Interacts with skr-1. Interacts with zyg-1. As to expression, expressed in tail and head neurons.

It localises to the cell projection. The protein localises to the axon. It is found in the cytoplasm. Its function is as follows. Probable substrate recognition component of SCF (SKP1-CUL-F-box protein) E3 ubiquitin-protein ligase complex, which mediates the ubiquitination and subsequent proteasomal degradation of target proteins. Regulates synapse elimination in early development in the motor neuron HSNL. Cell autonomous negative regulator of lin-12/Notch-mediated signaling, with respect to lin-12 activity in cell fate decisions and tumorigenesis. May target the intracellular domains of lin-12/Notch proteins for ubiquitin-dependent degradation. Involved in sex determination by promoting female development. Potential regulator of presenilin. May have a role in egg laying. Regulates zyg-1 levels (possibly redundantly with lin-23) to control centrosome duplication during mitosis. Negatively regulates lin-45 activity and protein stability, probably by targeting it for ubiquitination and proteasomal degradation. This is F-box/WD repeat-containing protein sel-10 from Caenorhabditis elegans.